The sequence spans 619 residues: Chaperone protein HscA homolog (619 aa).

The protein belongs to the heat shock protein 70 family.

In terms of biological role, chaperone involved in the maturation of iron-sulfur cluster-containing proteins. Has a low intrinsic ATPase activity which is markedly stimulated by HscB. The sequence is that of Chaperone protein HscA homolog from Pseudomonas paraeruginosa (strain DSM 24068 / PA7) (Pseudomonas aeruginosa (strain PA7)).